Consider the following 91-residue polypeptide: Probable Fe(2+)-trafficking protein (91 aa).

The protein belongs to the Fe(2+)-trafficking protein family.

Could be a mediator in iron transactions between iron acquisition and iron-requiring processes, such as synthesis and/or repair of Fe-S clusters in biosynthetic enzymes. In Shewanella amazonensis (strain ATCC BAA-1098 / SB2B), this protein is Probable Fe(2+)-trafficking protein.